Consider the following 27-residue polypeptide: ALPCPYGCPLRCCHMTDGVCLRNKQGC.

Disulfide bonds link C4–C13, C8–C20, and C12–C27.

As to expression, expressed by the venom duct.

Its subcellular location is the secreted. The protein is Augerpeptide hhe6.2 of Hastula hectica (Sea snail).